The sequence spans 146 residues: Large ribosomal subunit protein uL15y (146 aa).

Composition is skewed to basic residues over residues 1-14 and 21-30; these read MATA…KRGH and RIGKHRKHPG. Positions 1 to 38 are disordered; the sequence is MATALKKNRKKRGHVSAGHGRIGKHRKHPGGRGNAGGM.

The protein belongs to the universal ribosomal protein uL15 family.

The chain is Large ribosomal subunit protein uL15y (RPL27AB) from Arabidopsis thaliana (Mouse-ear cress).